The following is a 181-amino-acid chain: Interleukin-24 (181 aa).

Positions 1–26 (MSWGLQILPCLSLILLLWNQVPGLEG) are cleaved as a signal peptide. The cysteines at positions 34 and 81 are disulfide-linked. Asn-74 is a glycosylation site (N-linked (GlcNAc...) asparagine). Residue Lys-97 forms a Glycyl lysine isopeptide (Lys-Gly) (interchain with G-Cter in ubiquitin) linkage.

This sequence belongs to the IL-10 family. Post-translationally, glycosylated. In terms of processing, ubiquitination at Lys-97 promotes proteasomal degradation. In terms of tissue distribution, selectively expressed by Th2 cells. Expressed in the liver.

It localises to the secreted. Its function is as follows. Multifunctional cytokine mainly produced by T-cells that plays a regulatory role in immune response, tissue homeostasis, host defense, and oncogenesis. Possesses antiviral functions and induces the type I interferon response during influenza infection. Signals through two receptor complexes IL20RA/IL20RB or IL20RB/IL22RA1. In turn, stimulates the JAK1-STAT3 and MAPK pathways and promotes the secretion of pro-inflammatory mediators including IL8 and MMP1. Intracellularly, maintains endoplasmic reticulum homeostasis by restricting the eIF2alpha-CHOP pathway-mediated stress signal. In addition, acts as a quality control mechanism for the ubiquitin proteasome system by alerting the cell to proteasome dysfunction through activation of PKR/EIF2AK2. The chain is Interleukin-24 (Il24) from Mus musculus (Mouse).